The primary structure comprises 212 residues: Cytidylate kinase (212 aa).

Residue 7–15 (GPAASGKGT) coordinates ATP.

The protein belongs to the cytidylate kinase family. Type 1 subfamily.

It is found in the cytoplasm. It carries out the reaction CMP + ATP = CDP + ADP. The enzyme catalyses dCMP + ATP = dCDP + ADP. The protein is Cytidylate kinase of Rhodopseudomonas palustris (strain BisB5).